The primary structure comprises 222 residues: Phosphatidylinositol phosphate synthase (222 aa).

31–34 provides a ligand contact to a CDP-1,2-diacyl-sn-glycerol; sequence DIVT. The next 2 helical transmembrane spans lie at 32 to 49 and 55 to 74; these read IVTL…LTLF and WWGA…DGAM. 2 residues coordinate Mg(2+): aspartate 68 and aspartate 71. The a CDP-1,2-diacyl-sn-glycerol site is built by glycine 72, arginine 76, and threonine 82. Aspartate 89 and aspartate 93 together coordinate Mg(2+). Aspartate 93 serves as the catalytic Proton acceptor. The next 4 helical transmembrane spans lie at 95 to 112, 118 to 136, 156 to 173, and 179 to 196; these read LGDG…AFGL, VVAT…YIKA, LVIV…FFPL, and VAMW…LQRV.

It belongs to the CDP-alcohol phosphatidyltransferase class-I family. Homodimer. Requires Mg(2+) as cofactor.

The protein localises to the cell membrane. The protein resides in the secreted. It is found in the cell wall. It catalyses the reaction a CDP-1,2-diacyl-sn-glycerol + 1D-myo-inositol 3-phosphate = a 1,2-diacyl-sn-glycero-3-phospho-(1D-myo-inositol-3-phosphate) + CMP + H(+). The enzyme catalyses 1,2-di-(9Z-octadecenoyl)-sn-glycero-3-cytidine-5'-diphosphate + 1D-myo-inositol 3-phosphate = 1,2-di-(9Z-octadecenoyl)-sn-glycero-3-phospho-(1D-myo-inositol-3-phosphate) + CMP + H(+). The catalysed reaction is 1,2-dihexadecanoyl-sn-glycero-3-CDP + 1D-myo-inositol 3-phosphate = 1,2-dihexadecanoyl-sn-glycero-3-phospho-(1D-myo-inositol-3-phosphate) + CMP + H(+). It participates in phospholipid metabolism; phosphatidylinositol phosphate biosynthesis. Competitively inhibited by several inositol 1-phosphate analogs, including the phosphonate analog 1-deoxy-1-phosphonomethyl-myo-inositol (Ino-C-P). This leads to inhibition of M.smegmatis growth. In terms of biological role, catalyzes the conjugation of the 1'-hydroxyl group of D-myo-inositol-3-phosphate (also named L-myo-inositol-1-phosphate) with a lipid tail of cytidine diphosphate diacylglycerol (CDP-DAG), forming phosphatidylinositol phosphate (PIP) and CMP. PIP is a precursor of phosphatidylinositol (PI) which is an essential lipid for mycobacteria required for formation of their cell wall. Is essential to the survival of M.smegmatis. The chain is Phosphatidylinositol phosphate synthase from Mycolicibacterium smegmatis (strain ATCC 700084 / mc(2)155) (Mycobacterium smegmatis).